The following is a 336-amino-acid chain: Phospho-N-acetylmuramoyl-pentapeptide-transferase (336 aa).

A run of 10 helical transmembrane segments spans residues 3 to 23, 53 to 73, 78 to 98, 118 to 138, 143 to 163, 174 to 194, 200 to 220, 226 to 246, 251 to 271, and 316 to 336; these read LTLI…PYFI, GGTV…LFSI, SLAL…IGFL, LALQ…PSGI, VFGY…FWVV, GIDG…GVIA, FDVL…FCFN, VFMG…ISIA, WTLL…MLQV, and AFLW…LYVF.

Belongs to the glycosyltransferase 4 family. MraY subfamily. The cofactor is Mg(2+).

The protein localises to the cell membrane. It carries out the reaction UDP-N-acetyl-alpha-D-muramoyl-L-alanyl-gamma-D-glutamyl-L-lysyl-D-alanyl-D-alanine + di-trans,octa-cis-undecaprenyl phosphate = Mur2Ac(oyl-L-Ala-gamma-D-Glu-L-Lys-D-Ala-D-Ala)-di-trans,octa-cis-undecaprenyl diphosphate + UMP. Its pathway is cell wall biogenesis; peptidoglycan biosynthesis. Its function is as follows. Catalyzes the initial step of the lipid cycle reactions in the biosynthesis of the cell wall peptidoglycan: transfers peptidoglycan precursor phospho-MurNAc-pentapeptide from UDP-MurNAc-pentapeptide onto the lipid carrier undecaprenyl phosphate, yielding undecaprenyl-pyrophosphoryl-MurNAc-pentapeptide, known as lipid I. This Streptococcus pyogenes serotype M49 (strain NZ131) protein is Phospho-N-acetylmuramoyl-pentapeptide-transferase.